Consider the following 120-residue polypeptide: NAD(P)H-quinone oxidoreductase subunit 3, chloroplastic (120 aa).

Transmembrane regions (helical) follow at residues 9 to 29 (IFWA…LISG), 64 to 84 (MFAL…PWAM), and 88 to 108 (VLGV…IVGL).

The protein belongs to the complex I subunit 3 family. In terms of assembly, NDH is composed of at least 16 different subunits, 5 of which are encoded in the nucleus.

It is found in the plastid. Its subcellular location is the chloroplast thylakoid membrane. The catalysed reaction is a plastoquinone + NADH + (n+1) H(+)(in) = a plastoquinol + NAD(+) + n H(+)(out). It catalyses the reaction a plastoquinone + NADPH + (n+1) H(+)(in) = a plastoquinol + NADP(+) + n H(+)(out). In terms of biological role, NDH shuttles electrons from NAD(P)H:plastoquinone, via FMN and iron-sulfur (Fe-S) centers, to quinones in the photosynthetic chain and possibly in a chloroplast respiratory chain. The immediate electron acceptor for the enzyme in this species is believed to be plastoquinone. Couples the redox reaction to proton translocation, and thus conserves the redox energy in a proton gradient. The sequence is that of NAD(P)H-quinone oxidoreductase subunit 3, chloroplastic from Ranunculus macranthus (Large buttercup).